A 183-amino-acid chain; its full sequence is Mitochondrial import inner membrane translocase subunit tim17 (183 aa).

Helical transmembrane passes span 13–33 (AGGA…GLGF), 57–77 (GGNF…LSYI), and 107–127 (VQAA…QHMM). Over residues 131–141 (MQAQQEEMTQQ) the composition is skewed to polar residues. Positions 131 to 183 (MQAQQEEMTQQHLEERKRYEEERKQREGERKKLNENGKSKKNKQQQNGENDLD) are disordered. Over residues 142-168 (HLEERKRYEEERKQREGERKKLNENGK) the composition is skewed to basic and acidic residues. A compositionally biased stretch (low complexity) spans 174-183 (QQQNGENDLD).

Belongs to the Tim17/Tim22/Tim23 family.

The protein resides in the mitochondrion inner membrane. May be involved in the translocation of transit peptide-containing proteins across the mitochondrial inner membrane. This Dictyostelium discoideum (Social amoeba) protein is Mitochondrial import inner membrane translocase subunit tim17 (timm17).